A 106-amino-acid polypeptide reads, in one-letter code: Protein yippee-like At4g27745 (106 aa).

In terms of domain architecture, Yippee spans 8–105; it reads RLYSCCNCRN…FEKAKIVKED (98 aa). Zn(2+) is bound by residues Cys12, Cys15, Cys68, and Cys71.

The protein belongs to the yippee family.

In Arabidopsis thaliana (Mouse-ear cress), this protein is Protein yippee-like At4g27745.